Consider the following 72-residue polypeptide: Large ribosomal subunit protein bL31 (72 aa).

Zn(2+) is bound by residues cysteine 16, cysteine 18, cysteine 37, and cysteine 40.

This sequence belongs to the bacterial ribosomal protein bL31 family. Type A subfamily. As to quaternary structure, part of the 50S ribosomal subunit. It depends on Zn(2+) as a cofactor.

Its function is as follows. Binds the 23S rRNA. This chain is Large ribosomal subunit protein bL31, found in Buchnera aphidicola subsp. Schizaphis graminum (strain Sg).